The chain runs to 509 residues: tRNA (guanine(37)-N(1))-methyltransferase (509 aa).

A mitochondrion-targeting transit peptide spans 1 to 57; the sequence is MVLWILWRPFGFSRRLLKLERHSITESKSLIPLAWTSLTQTLSESPGIFLLGQRKRF. S-adenosyl-L-methionine-binding positions include histidine 289, 327–328, 355–356, and asparagine 387; these read DL and DG. The disordered stretch occupies residues 478 to 509; it reads TKNPENHEDPPLKRQRTAEAFSDEKTQIASNT.

This sequence belongs to the class I-like SAM-binding methyltransferase superfamily. TRM5/TYW2 family. In terms of assembly, monomer.

The protein localises to the mitochondrion matrix. The protein resides in the nucleus. Its subcellular location is the cytoplasm. The enzyme catalyses guanosine(37) in tRNA + S-adenosyl-L-methionine = N(1)-methylguanosine(37) in tRNA + S-adenosyl-L-homocysteine + H(+). Involved in mitochondrial tRNA methylation. Specifically methylates the N1 position of guanosine-37 in various tRNAs. Methylation is not dependent on the nature of the nucleoside 5' of the target nucleoside. This is the first step in the biosynthesis of wybutosine (yW), a modified base adjacent to the anticodon of tRNAs and required for accurate decoding. The polypeptide is tRNA (guanine(37)-N(1))-methyltransferase (Macaca mulatta (Rhesus macaque)).